A 71-amino-acid chain; its full sequence is Translation initiation factor IF-1 (71 aa).

The 71-residue stretch at 1 to 71 (MAKQSAIEQD…LSKARITYRY (71 aa)) folds into the S1-like domain.

The protein belongs to the IF-1 family. Component of the 30S ribosomal translation pre-initiation complex which assembles on the 30S ribosome in the order IF-2 and IF-3, IF-1 and N-formylmethionyl-tRNA(fMet); mRNA recruitment can occur at any time during PIC assembly.

It localises to the cytoplasm. One of the essential components for the initiation of protein synthesis. Stabilizes the binding of IF-2 and IF-3 on the 30S subunit to which N-formylmethionyl-tRNA(fMet) subsequently binds. Helps modulate mRNA selection, yielding the 30S pre-initiation complex (PIC). Upon addition of the 50S ribosomal subunit IF-1, IF-2 and IF-3 are released leaving the mature 70S translation initiation complex. The polypeptide is Translation initiation factor IF-1 (Flavobacterium psychrophilum (strain ATCC 49511 / DSM 21280 / CIP 103535 / JIP02/86)).